Consider the following 338-residue polypeptide: Fructose-1,6-bisphosphatase class 1 1 (338 aa).

Residues Glu91, Asp113, Leu115, and Asp116 each contribute to the Mg(2+) site. Substrate-binding positions include 116–119, Asn208, and Lys274; that span reads DGSS. Glu280 is a Mg(2+) binding site.

It belongs to the FBPase class 1 family. In terms of assembly, homotetramer. It depends on Mg(2+) as a cofactor.

The protein localises to the cytoplasm. It carries out the reaction beta-D-fructose 1,6-bisphosphate + H2O = beta-D-fructose 6-phosphate + phosphate. It participates in carbohydrate biosynthesis; gluconeogenesis. The protein is Fructose-1,6-bisphosphatase class 1 1 of Cupriavidus necator (strain ATCC 17699 / DSM 428 / KCTC 22496 / NCIMB 10442 / H16 / Stanier 337) (Ralstonia eutropha).